The sequence spans 363 residues: Sensor protein BasS (363 aa).

Residues 1 to 13 (MHFLRRPISLRQR) are Cytoplasmic-facing. Residues 14 to 34 (LILTIGAILLVFELISVFWLW) traverse the membrane as a helical segment. Residues 35-64 (HESTEQIQLFEQALRDNRNNDRHIMREIRE) are Periplasmic-facing. Residues 65-88 (AVASLIVPGVFMVSLTLFICYQAV) traverse the membrane as a helical segment. The 53-residue stretch at 89–141 (RRITRPLAELQKELEARTADNLTPIAIHSATLEIEAVVSALNDLVSRLTSTLD) folds into the HAMP domain. Residues 89-363 (RRITRPLAEL…KKDQYVANQI (275 aa)) are Cytoplasmic-facing. One can recognise a Histidine kinase domain in the interval 149-357 (DVAHELRTPL…RAWVRLKKDQ (209 aa)). His-152 is subject to Phosphohistidine; by autocatalysis.

Autophosphorylated.

The protein localises to the cell inner membrane. The enzyme catalyses ATP + protein L-histidine = ADP + protein N-phospho-L-histidine.. Member of the two-component regulatory system BasS/BasR Autophosphorylates and activates BasR by phosphorylation. The chain is Sensor protein BasS (basS) from Escherichia coli (strain K12).